The primary structure comprises 458 residues: MYSMEQVVNLAKHRGFVFPGSEIYGGLANTWDYGPLGIELKNNVKKAWWKKFIQESPYNVGLDAAILMNPKTWIASGHVGNFNDPMIDCKKCKARHRADKLIEDALDAKGIEMVVDGLTFDQMADLMKEHEVKCPDCSSEEFTEIRQFNLMFKTFQGVTESSTNEIFLRPETAQGIFVNFKNVQRSMRKKLPFGIGQIGKSFRNEITPGNFTFRTREFEQMELEFFCKPGEDLEWFAFWRETCKNWLLSLGMTEESMRLRDHGEEELSHYSNATTDIEFKFPFGWGELWGVASRTDFDLKRHMEHSNEDFNYIDPQTNERYVPYCIEPSLGADRVTLAFLCDAYEEEQLENDSRTVLRFHPALAPYKAAILPLSKKLSEGATEVFAELAKDFMVDFDETGSIGKRYRRQDEIGTPFCITYDFDSVEDKAVTVRDRDTMEQVRMPISELKGFLEKKIQF.

Residues R97 and E171 each contribute to the substrate site. ATP-binding positions include 203-205, 213-218, 287-288, and 331-334; these read RNE, FRTREF, EL, and GADR. Position 218 to 222 (218 to 222) interacts with substrate; it reads FEQME. Position 327 to 331 (327 to 331) interacts with substrate; it reads EPSLG.

It belongs to the class-II aminoacyl-tRNA synthetase family. Homodimer.

The protein localises to the cytoplasm. The enzyme catalyses tRNA(Gly) + glycine + ATP = glycyl-tRNA(Gly) + AMP + diphosphate. In terms of biological role, catalyzes the attachment of glycine to tRNA(Gly). The polypeptide is Glycine--tRNA ligase (Bacillus thuringiensis subsp. konkukian (strain 97-27)).